The following is a 351-amino-acid chain: GDSL esterase/lipase At4g26790 (351 aa).

Residues 1-25 form the signal peptide; the sequence is MQRNRVLAFLLLAAQLLVKIPETCA. Residue S36 is the Nucleophile of the active site. A glycan (N-linked (GlcNAc...) asparagine) is linked at N118. Catalysis depends on residues D326 and H329.

Belongs to the 'GDSL' lipolytic enzyme family.

It localises to the secreted. The polypeptide is GDSL esterase/lipase At4g26790 (Arabidopsis thaliana (Mouse-ear cress)).